Reading from the N-terminus, the 1840-residue chain is Sodium channel protein type 4 subunit alpha (1840 aa).

Residues 1-131 (MASSSLPNLV…RVAIKVLIHA (131 aa)) lie on the Cytoplasmic side of the membrane. A compositionally biased stretch (basic and acidic residues) spans 36–60 (EARLQRNKQMEIEEPERKPRSDLEA). Positions 36–63 (EARLQRNKQMEIEEPERKPRSDLEAGKN) are disordered. The stretch at 113–448 (LLSPFSIVRR…VVAMAYAEQN (336 aa)) is one I repeat. The helical transmembrane segment at 132-150 (LFSMFIMITILTNCVFMTM) threads the bilayer. At 151 to 157 (SNPPSWS) the chain is on the extracellular side. Residues 158 to 178 (KHVEYTFTGIYTFESLIKMLA) form a helical membrane-spanning segment. The Cytoplasmic segment spans residues 179–192 (RGFCIDDFTFLRDP). Residues 193 to 210 (WNWLDFSVITMAYVTEFV) traverse the membrane as a helical segment. Topologically, residues 211–216 (DLGNIS) are extracellular. The helical transmembrane segment at 217–233 (ALRTFRVLRALKTITVI) threads the bilayer. Residues 234–252 (PGLKTIVGALIQSVKKLSD) lie on the Cytoplasmic side of the membrane. A helical transmembrane segment spans residues 253-272 (VMILTVFCLSVFALVGLQLF). Over 273 to 385 (MGNLRQKCVR…PNYGYTSYDT (113 aa)) the chain is Extracellular. C280 and C354 are oxidised to a cystine. N-linked (GlcNAc...) asparagine glycosylation is found at N288, N291, N297, N303, N309, N315, N327, and N356. A disulfide bridge links C363 with C369. The segment at residues 386–410 (FSWAFLALFRLMTQDYWENLFQLTL) is an intramembrane region (pore-forming). Topologically, residues 411–417 (RAAGKTY) are extracellular. A helical transmembrane segment spans residues 418-438 (MIFFVVIIFLGSFYLINLILA). The Cytoplasmic segment spans residues 439–572 (VVAMAYAEQN…HIIYLIVMDP (134 aa)). Residues 481 to 522 (AAQALESGEEADGDPTHNKDCNGSLDASGEKGPPRPSCSADS) form a disordered region. S487 carries the post-translational modification Phosphoserine. One copy of the II repeat lies at 554-826 (CCAPWVKFKH…QIAIGRIKWG (273 aa)). Residues 573–591 (FVDLGITICIVLNTLFMAM) form a helical membrane-spanning segment. At 592-602 (EHYPMTEHFDN) the chain is on the extracellular side. A helical membrane pass occupies residues 603–622 (VLSVGNLVFTGIFTAEMVLK). Residues 623 to 636 (LIAMDPYEYFQQGW) are Cytoplasmic-facing. A helical transmembrane segment spans residues 637 to 656 (NIFDSFIVTLSLVELGLANV). Residues 657 to 658 (QG) lie on the Extracellular side of the membrane. A helical transmembrane segment spans residues 659–676 (LSVLRSFRLLRVFKLAKS). Residues 677-692 (WPTLNMLIKIIGNSVG) lie on the Cytoplasmic side of the membrane. Residues 693 to 711 (ALGNLTLVLAIIVFIFAVV) form a helical membrane-spanning segment. The Extracellular segment spans residues 712–740 (GMQLFGKSYKECVCKIASDCNLPRWHMND). Cysteines 725 and 731 form a disulfide. Residues 741–761 (FFHSFLIVFRILCGEWIETMW) constitute an intramembrane region (pore-forming). Residues 762 to 772 (DCMEVAGQAMC) are Extracellular-facing. The cysteines at positions 763 and 772 are disulfide-linked. The chain crosses the membrane as a helical span at residues 773 to 791 (LTVFLMVMVIGNLVVLNLF). The Cytoplasmic portion of the chain corresponds to 792–1025 (LALLLSSFSA…ACFKIVEHNW (234 aa)). Disordered stretches follow at residues 854–884 (EPGG…LKDN) and 925–983 (DLEM…GEQP). A compositionally biased stretch (basic and acidic residues) spans 868 to 884 (EDEKKEPPPEDKELKDN). Composition is skewed to acidic residues over residues 925–940 (DLEM…FSEP) and 968–983 (EDPE…GEQP). Residues 1006–1319 (RGKMWWTLRR…KKYYNAMKKL (314 aa)) form an III repeat. The helical transmembrane segment at 1026 to 1043 (FETFIVFMILLSSGALAF) threads the bilayer. Residues 1044–1056 (EDIYIEQRRVIRT) are Extracellular-facing. The chain crosses the membrane as a helical span at residues 1057 to 1075 (ILEYADKVFTYIFILEMLL). At 1076–1089 (KWVAYGFKVYFTNA) the chain is on the cytoplasmic side. A helical transmembrane segment spans residues 1090–1108 (WCWLDFLIVDVSIISLVAN). At 1109 to 1116 (WLGYSELG) the chain is on the extracellular side. Residues 1117-1135 (PIKSLRTLRALRPLRALSR) form a helical membrane-spanning segment. The Cytoplasmic portion of the chain corresponds to 1136-1152 (FEGMRVVVNALLGAIPS). The helical transmembrane segment at 1153–1172 (IMNVLLVCLIFWLIFSIMGV) threads the bilayer. Over 1173 to 1223 (NLFAGKFYYCVNTTTSERFDISVVNNKSESESLMYTGQVRWMNVKVNYDNV) the chain is Extracellular. A glycan (N-linked (GlcNAc...) asparagine) is linked at N1198. Residues 1224-1245 (GLGYLSLLQVATFKGWMDIMYA) constitute an intramembrane region (pore-forming). At 1246–1262 (AVDSREKEEQPHYEVNL) the chain is on the extracellular side. A helical membrane pass occupies residues 1263–1284 (YMYLYFVIFIIFGSFFTLNLFI). Residues 1285–1347 (GVIIDNFNQQ…MVYDFVTKQV (63 aa)) lie on the Cytoplasmic side of the membrane. The segment at 1303 to 1305 (IFM) is important for rapid channel inactivation. An IV repeat occupies 1328–1626 (IPRPQNKIQG…WEKFDPDATQ (299 aa)). Residues 1348–1365 (FDISIMILICLNMVTMMV) traverse the membrane as a helical segment. Topologically, residues 1366–1376 (ETDDQSQLKVD) are extracellular. A helical transmembrane segment spans residues 1377 to 1395 (ILYNINMVFIIIFTGECVL). Residues 1396–1407 (KMFALRHYYFTI) lie on the Cytoplasmic side of the membrane. A helical transmembrane segment spans residues 1408–1425 (GWNIFDFVVVILSIVGLA). Over 1426–1438 (LSDLIQKYFVSPT) the chain is Extracellular. The helical transmembrane segment at 1439-1455 (LFRVIRLARIGRVLRLI) threads the bilayer. Residues 1456–1474 (RGAKGIRTLLFALMMSLPA) lie on the Cytoplasmic side of the membrane. Residues 1475 to 1492 (LFNIGLLLFLVMFIYSIF) traverse the membrane as a helical segment. Topologically, residues 1493–1514 (GMSNFAYVKKESGIDDMFNFET) are extracellular. An intramembrane region (pore-forming) is located at residues 1515 to 1537 (FGNSIICLFEITTSAGWDGLLNP). The Extracellular portion of the chain corresponds to 1538 to 1567 (ILNSGPPDCDPTLENPGTNVRGDCGNPSIG). C1546 and C1561 are oxidised to a cystine. A helical transmembrane segment spans residues 1568 to 1590 (ICFFCSYIIISFLIVVNMYIAII). At 1591 to 1840 (LENFNVATEE…VRPGVKESLV (250 aa)) the chain is on the cytoplasmic side. An IQ domain is found at 1720 to 1749 (EEVCAIKIQRAYRRHLLQRSVKQASYMYRH). The segment at 1775–1840 (HEKEGDGVQS…VRPGVKESLV (66 aa)) is disordered. Over residues 1804 to 1813 (PTSSSDTALT) the composition is skewed to low complexity. Residues 1814 to 1824 (PSPPPLPPSSS) are compositionally biased toward pro residues.

This sequence belongs to the sodium channel (TC 1.A.1.10) family. Nav1.4/SCN4A subfamily. As to quaternary structure, the Nav1.4 voltage-gated sodium channel consists of an ion-conducting alpha subunit SCN4A which is functional on its own and a regulatory beta subunit SCN1B. SCN1B strongly enhances the presence of SCN4A at the cell surface. SCN1B is also required for rapid channel inactivation and recovery after inactivation. It prevents the decrease of channel activity in response to repetitive, high-frequency depolarizations. Interacts with the syntrophins SNTA1, SNTB1 and SNTB2 (via PDZ domain); probably links SCN4A to the actin cytoskeleton and the extracellular matrix via the dystrophin-associated protein complex and regulates its localization in muscle cells. Interacts with TMEM233; probable regulator of the channel. In terms of tissue distribution, detected in skeletal muscle.

It localises to the cell membrane. It carries out the reaction Na(+)(in) = Na(+)(out). Potently inhibited by tetrodotoxin and saxitoxin. Inhibited by the conotoxin GVIIJ. Pore-forming subunit of Nav1.4, a voltage-gated sodium (Nav) channel that directly mediates the depolarizing phase of action potentials in excitable membranes. Navs, also called VGSCs (voltage-gated sodium channels) or VDSCs (voltage-dependent sodium channels), operate by switching between closed and open conformations depending on the voltage difference across the membrane. In the open conformation they allow Na(+) ions to selectively pass through the pore, along their electrochemical gradient. The influx of Na+ ions provokes membrane depolarization, initiating the propagation of electrical signals throughout cells and tissues. Highly expressed in skeletal muscles, Nav1.4 generates the action potential crucial for muscle contraction. The chain is Sodium channel protein type 4 subunit alpha from Rattus norvegicus (Rat).